The primary structure comprises 160 residues: Phosphopantetheine adenylyltransferase (160 aa).

Ser9 is a substrate binding site. Residues Ser9–Phe10 and His17 each bind ATP. Substrate is bound by residues Lys41, Val73, and Lys87. ATP is bound by residues Gly88–Arg90, Glu98, and Tyr122–Ser128.

It belongs to the bacterial CoaD family. In terms of assembly, homohexamer. Mg(2+) serves as cofactor.

The protein localises to the cytoplasm. It carries out the reaction (R)-4'-phosphopantetheine + ATP + H(+) = 3'-dephospho-CoA + diphosphate. It participates in cofactor biosynthesis; coenzyme A biosynthesis; CoA from (R)-pantothenate: step 4/5. Its function is as follows. Reversibly transfers an adenylyl group from ATP to 4'-phosphopantetheine, yielding dephospho-CoA (dPCoA) and pyrophosphate. The chain is Phosphopantetheine adenylyltransferase from Mycobacterium avium (strain 104).